A 179-amino-acid chain; its full sequence is Large ribosomal subunit protein uL6 (179 aa).

It belongs to the universal ribosomal protein uL6 family. In terms of assembly, part of the 50S ribosomal subunit.

Functionally, this protein binds to the 23S rRNA, and is important in its secondary structure. It is located near the subunit interface in the base of the L7/L12 stalk, and near the tRNA binding site of the peptidyltransferase center. This Synechococcus elongatus (strain ATCC 33912 / PCC 7942 / FACHB-805) (Anacystis nidulans R2) protein is Large ribosomal subunit protein uL6.